The following is an 89-amino-acid chain: Small ribosomal subunit protein bS20 (89 aa).

It belongs to the bacterial ribosomal protein bS20 family.

Binds directly to 16S ribosomal RNA. The protein is Small ribosomal subunit protein bS20 of Phenylobacterium zucineum (strain HLK1).